A 910-amino-acid chain; its full sequence is Staphylococcal nuclease domain-containing protein 1 (910 aa).

An N-acetylalanine modification is found at alanine 2. 3 consecutive TNase-like domains span residues threonine 18–glutamate 166, lysine 193–aspartate 328, and lysine 341–lysine 496. Threonine 103 is subject to Phosphothreonine. Position 193 is an N6-acetyllysine (lysine 193). Threonine 240 is subject to Phosphothreonine. 2 short sequence motifs (nuclear localization signal) span residues arginine 321–isoleucine 325 and lysine 388–proline 392. Serine 426 carries the phosphoserine modification. Lysine 513 participates in a covalent cross-link: Glycyl lysine isopeptide (Lys-Gly) (interchain with G-Cter in SUMO2). The TNase-like 4 domain occupies glycine 525–histidine 660. Lysine 641 is modified (N6-acetyllysine). A Phosphoserine modification is found at serine 645. The Tudor domain occupies alanine 729 to arginine 787. The residue at position 779 (threonine 779) is a Phosphothreonine. A phosphoserine mark is found at serine 781, serine 785, and serine 909.

As to quaternary structure, forms a ternary complex with STAT6 and POLR2A. Associates with the RNA-induced silencing complex (RISC). Interacts with the RISC components AGO2, FMR1 and TNRC6A. Interacts with GTF2E1 and GTF2E2. Interacts with PIM1. Interacts with STAT5. Interacts with SYT11 (via C2 2 domain); the interaction with SYT11 is direct. In terms of assembly, (Microbial infection) Interacts with EAV NSP1. Binds to acidic transactivation domain of EBNA2. Interacts with SARS-CoV-2 NSP9. In terms of processing, phosphorylated by PIM1 in vitro. Ubiquitously expressed.

The protein localises to the cytoplasm. It is found in the nucleus. Its subcellular location is the melanosome. The enzyme catalyses Endonucleolytic cleavage to nucleoside 3'-phosphates and 3'-phosphooligonucleotide end-products.. Its function is as follows. Endonuclease that mediates miRNA decay of both protein-free and AGO2-loaded miRNAs. As part of its function in miRNA decay, regulates mRNAs involved in G1-to-S phase transition. Functions as a bridging factor between STAT6 and the basal transcription factor. Plays a role in PIM1 regulation of MYB activity. Functions as a transcriptional coactivator for STAT5. In terms of biological role, (Microbial infection) Functions as a transcriptional coactivator for the Epstein-Barr virus nuclear antigen 2 (EBNA2). Functionally, (Microbial infection) Promotes SARS-CoV-2 RNA synthesis by binding to negative-sense RNA and the viral protein nsp9. The polypeptide is Staphylococcal nuclease domain-containing protein 1 (SND1) (Homo sapiens (Human)).